A 185-amino-acid chain; its full sequence is Celestoxin (185 aa).

The signal sequence occupies residues 1 to 20 (MKFIAAVLLVALLCPKDSTS). The propeptide occupies 21–148 (LASRLSGLLG…GLPVALPVSV (128 aa)).

In terms of tissue distribution, expressed by the mandibular venom gland.

Its subcellular location is the secreted. Has a hypotensive activity. The protein is Celestoxin of Caribicus warreni (Haitian giant galliwasp).